The chain runs to 168 residues: Ribosome maturation factor RimM (168 aa).

Residues 96–168 (EDEYFITDLI…VMIVRLLEGL (73 aa)) form the PRC barrel domain.

It belongs to the RimM family. Binds ribosomal protein uS19.

The protein localises to the cytoplasm. Its function is as follows. An accessory protein needed during the final step in the assembly of 30S ribosomal subunit, possibly for assembly of the head region. Essential for efficient processing of 16S rRNA. May be needed both before and after RbfA during the maturation of 16S rRNA. It has affinity for free ribosomal 30S subunits but not for 70S ribosomes. This is Ribosome maturation factor RimM from Caldanaerobacter subterraneus subsp. tengcongensis (strain DSM 15242 / JCM 11007 / NBRC 100824 / MB4) (Thermoanaerobacter tengcongensis).